The sequence spans 35 residues: Photosystem II reaction center protein T (35 aa).

A helical membrane pass occupies residues 3–23 (ALVYTFLLVGTLGIIFFAIFF).

The protein belongs to the PsbT family. PSII is composed of 1 copy each of membrane proteins PsbA, PsbB, PsbC, PsbD, PsbE, PsbF, PsbH, PsbI, PsbJ, PsbK, PsbL, PsbM, PsbT, PsbY, PsbZ, Psb30/Ycf12, at least 3 peripheral proteins of the oxygen-evolving complex and a large number of cofactors. It forms dimeric complexes.

The protein resides in the plastid. It is found in the chloroplast thylakoid membrane. Found at the monomer-monomer interface of the photosystem II (PS II) dimer, plays a role in assembly and dimerization of PSII. PSII is a light-driven water plastoquinone oxidoreductase, using light energy to abstract electrons from H(2)O, generating a proton gradient subsequently used for ATP formation. The sequence is that of Photosystem II reaction center protein T from Staurastrum punctulatum (Green alga).